Here is a 106-residue protein sequence, read N- to C-terminus: Translation initiation factor 1A 2 (106 aa).

The tract at residues 1–24 is disordered; sequence MRKRREGTANNSPTPEVTRVRTPR. The 75-residue stretch at 18–92 folds into the S1-like domain; sequence TRVRTPRKEN…SKADVIWKYT (75 aa).

This sequence belongs to the eIF-1A family.

In terms of biological role, seems to be required for maximal rate of protein biosynthesis. Enhances ribosome dissociation into subunits and stabilizes the binding of the initiator Met-tRNA(I) to 40 S ribosomal subunits. The polypeptide is Translation initiation factor 1A 2 (eIF1A2) (Methanosarcina mazei (strain ATCC BAA-159 / DSM 3647 / Goe1 / Go1 / JCM 11833 / OCM 88) (Methanosarcina frisia)).